Reading from the N-terminus, the 377-residue chain is MRGQWSLLLGPARLCLRLLLLLGYRRRCPPLLRGLVQRWRYGKVCLRSLLYNSFGGSDTAVDAAFEPIYWLVDNVIRWCGVVFVVLVIVLTSSIVAIAYLCVLPLILQTYSVPRLCWHFFYSHWNLILIVFHYYQAITTPPGYPPQGRNDMTTVSICKKCINPKPARTHHCSICNRCVLKMDHHCPWLNNCVGHYNHRYFFSFCFFMTLGCVYCSYGSWDLFREAYAAIEKMKQLDKNKLQAVANQTYHQTPPPTFSFRERVTHKSLVYLWFLCSSVALALGALTIWHAVLISRGETSIERHINKKERQRLQAKGRVFRNHYNYGCLDNWKVFLGVDTGRHWLTRVLLPSSHLPHGNGMSWDPPPWVTAHSASVMAV.

Residues 1-79 (MRGQWSLLLG…WLVDNVIRWC (79 aa)) lie on the Cytoplasmic side of the membrane. A helical membrane pass occupies residues 80–100 (GVVFVVLVIVLTSSIVAIAYL). Over 101-116 (CVLPLILQTYSVPRLC) the chain is Lumenal. The chain crosses the membrane as a helical span at residues 117-137 (WHFFYSHWNLILIVFHYYQAI). Residues 138 to 198 (TTPPGYPPQG…NNCVGHYNHR (61 aa)) lie on the Cytoplasmic side of the membrane. The 51-residue stretch at 155-205 (SICKKCINPKPARTHHCSICNRCVLKMDHHCPWLNNCVGHYNHRYFFSFCF) folds into the DHHC domain. Residue cysteine 185 is the S-palmitoyl cysteine intermediate of the active site. The helical transmembrane segment at 199–219 (YFFSFCFFMTLGCVYCSYGSW) threads the bilayer. The Lumenal segment spans residues 220–266 (DLFREAYAAIEKMKQLDKNKLQAVANQTYHQTPPPTFSFRERVTHKS). A helical membrane pass occupies residues 267-287 (LVYLWFLCSSVALALGALTIW). Topologically, residues 288-377 (HAVLISRGET…TAHSASVMAV (90 aa)) are cytoplasmic.

The protein belongs to the DHHC palmitoyltransferase family. Interacts with ABL1. Interacts with COPS5/JAB1.

The protein localises to the endoplasmic reticulum membrane. The catalysed reaction is L-cysteinyl-[protein] + hexadecanoyl-CoA = S-hexadecanoyl-L-cysteinyl-[protein] + CoA. In terms of biological role, palmitoyl acyltransferase that mediates palmitoylation of proteins such as PLN and ZDHHC6. Required during embryonic heart development and cardiac function, possibly by mediating palmitoylation of PLN, thereby affecting PLN phosphorylation and homooligomerization. Also required for eye development. Palmitoylates ZDHHC6, affecting the quaternary assembly of ZDHHC6, its localization, stability and function. May play a role in DNA damage response. May be involved in apoptosis regulation. Involved in the proliferation of neural stem cells by regulating the FGF/ERK pathway. The polypeptide is Palmitoyltransferase ZDHHC16 (Bos taurus (Bovine)).